We begin with the raw amino-acid sequence, 555 residues long: Probable metabolite transport protein YDR387C (555 aa).

Residues 1 to 39 (MSTDESEDVYSDLYSIISQVTSNTANDIEQLPYALTFKT) lie on the Cytoplasmic side of the membrane. The chain crosses the membrane as a helical span at residues 40-60 (SLIFVGATIGGLLFGYDTGVI). Topologically, residues 61–83 (SGVLLSLKPEDLSLVVLTDVQKE) are extracellular. A helical membrane pass occupies residues 84–104 (LITSSTSVGSFFGSILAFPLA). Residues 105–118 (DRYGRRITLAICCS) lie on the Cytoplasmic side of the membrane. Residues 119 to 139 (IFILAAIGMAIARTLTFLICG) form a helical membrane-spanning segment. A topological domain (extracellular) is located at residue Arg-140. Residues 141–161 (LLVGIAVGVSAQCVPLFLSEI) traverse the membrane as a helical segment. The Cytoplasmic portion of the chain corresponds to 162 to 168 (SPSRIRG). Residues 169–189 (FMLTLNIIAITGGQLVSYVIA) traverse the membrane as a helical segment. Over 190-200 (SLMKEIDNSWR) the chain is Extracellular. The chain crosses the membrane as a helical span at residues 201–221 (YLFALSAIPAILFLSILDFIP). Residues 222-356 (ESPRWSISKG…TIRALIVGCM (135 aa)) are Cytoplasmic-facing. Positions 289–313 (SSTSGTLSPPNIKRLSSNTERTSNT) are disordered. The helical transmembrane segment at 357–377 (LMFFQQITGFNAFMYYAAIIF) threads the bilayer. The Extracellular portion of the chain corresponds to 378-384 (SKFNIKN). A helical membrane pass occupies residues 385–405 (PLLPPILIASTNFIFTFFAMY). Residues 406 to 413 (TMDSLGRR) are Cytoplasmic-facing. A helical membrane pass occupies residues 414–434 (AILLRTILIMTVGLLLCSVGF). At 435–440 (GHDQVN) the chain is on the extracellular side. The chain crosses the membrane as a helical span at residues 441-461 (LLLISVVIYVAAYASAMGSVP). The Cytoplasmic portion of the chain corresponds to 462 to 474 (WTCVEFLPLNRRS). A helical transmembrane segment spans residues 475–497 (FGASCIACTNWLTNAFVSMTYLS). Over 498-506 (TINTIGDEN) the chain is Extracellular. The helical transmembrane segment at 507-527 (TMLIFAFFTVCAWFFVYFWYP) threads the bilayer. At 528–555 (EVKGLSLEEVGRVFDNGIDVHYVFRTYH) the chain is on the cytoplasmic side.

This sequence belongs to the major facilitator superfamily. Sugar transporter (TC 2.A.1.1) family.

The protein resides in the membrane. This chain is Probable metabolite transport protein YDR387C, found in Saccharomyces cerevisiae (strain ATCC 204508 / S288c) (Baker's yeast).